The chain runs to 249 residues: 5'-nucleotidase SurE (249 aa).

Residues aspartate 8, aspartate 9, serine 39, and asparagine 91 each contribute to the a divalent metal cation site.

It belongs to the SurE nucleotidase family. Requires a divalent metal cation as cofactor.

It localises to the cytoplasm. The catalysed reaction is a ribonucleoside 5'-phosphate + H2O = a ribonucleoside + phosphate. Its function is as follows. Nucleotidase that shows phosphatase activity on nucleoside 5'-monophosphates. The chain is 5'-nucleotidase SurE from Magnetococcus marinus (strain ATCC BAA-1437 / JCM 17883 / MC-1).